We begin with the raw amino-acid sequence, 223 residues long: MRVLVVEDNALLRHHLKVQIQDAGHQVDDAEDAKEADYYLNEHIPDIAIVDLGLPDEDGLSLIRRWRSNDVSLPILVLTARESWQDKVEVLSAGADDYVTKPFHIEEVMARMQALMRRNSGLASQVISLPPFQVDLSRRELSINDEVIKLTAFEYTIMETLIRNNGKVVSKDSLMLQLYPDAELRESHTIDVLMGRLRKKIQAQYPQEVITTVRGQGYLFELR.

The region spanning 2 to 116 (RVLVVEDNAL…EVMARMQALM (115 aa)) is the Response regulatory domain. Aspartate 51 carries the 4-aspartylphosphate modification. A DNA-binding region (ompR/PhoB-type) is located at residues 124-222 (SQVISLPPFQ…VRGQGYLFEL (99 aa)).

Monomer in the inactive, unphosphorylated state and dimer in the active, phosphorylated state. Phosphorylated by PhoQ.

It is found in the cytoplasm. With respect to regulation, feedback inhibited by MgrB, which seems to bind PhoQ, altering its activity and that of downstream effector PhoP. PhoP-regulated transcription is redox-sensitive, being activated when the periplasm becomes more reducing (deletion of dsbA/dsbB, or treatment with dithiothreitol). MgrB acts between DsbA/DsbB and PhoP/PhoQ in this pathway. Its function is as follows. Member of the two-component regulatory system PhoP/PhoQ involved in adaptation to low Mg(2+) environments and the control of acid resistance genes. In low periplasmic Mg(2+), PhoQ phosphorylates PhoP, resulting in the expression of PhoP-activated genes (PAG) and repression of PhoP-repressed genes (PRG). In high periplasmic Mg(2+), PhoQ dephosphorylates phospho-PhoP, resulting in the repression of PAG and may lead to expression of some PRG. Mediates magnesium influx to the cytosol by activation of MgtA. Promotes expression of the two-component regulatory system rstA/rstB and transcription of the hemL, mgrB, nagA, slyB, vboR and yrbL genes. The sequence is that of Transcriptional regulatory protein PhoP (phoP) from Escherichia coli (strain K12).